Reading from the N-terminus, the 194-residue chain is dCTP deaminase (194 aa).

Residues 110-115 (RSSLAR), Asp-128, 136-138 (VLE), Tyr-171, Lys-178, and Gln-182 each bind dCTP. Glu-138 acts as the Proton donor/acceptor in catalysis.

Belongs to the dCTP deaminase family. In terms of assembly, homotrimer.

The catalysed reaction is dCTP + H2O + H(+) = dUTP + NH4(+). Its pathway is pyrimidine metabolism; dUMP biosynthesis; dUMP from dCTP (dUTP route): step 1/2. Its function is as follows. Catalyzes the deamination of dCTP to dUTP. The protein is dCTP deaminase of Pseudoalteromonas translucida (strain TAC 125).